Consider the following 406-residue polypeptide: Pyruvate dehydrogenase E1 component subunit beta-3, chloroplastic (406 aa).

The transit peptide at 1–70 (MSAILQGAGA…PLIPNAVTTK (70 aa)) directs the protein to the chloroplast. Glu142 serves as a coordination point for thiamine diphosphate. Val195, Ala243, Ile244, and Asn248 together coordinate K(+).

Tetramer of 2 alpha and 2 beta subunits. It depends on thiamine diphosphate as a cofactor.

It is found in the plastid. It localises to the chloroplast. It catalyses the reaction N(6)-[(R)-lipoyl]-L-lysyl-[protein] + pyruvate + H(+) = N(6)-[(R)-S(8)-acetyldihydrolipoyl]-L-lysyl-[protein] + CO2. Functionally, the pyruvate dehydrogenase complex catalyzes the overall conversion of pyruvate to acetyl-CoA and CO(2). It contains multiple copies of three enzymatic components: pyruvate dehydrogenase (E1), dihydrolipoamide acetyltransferase (E2) and lipoamide dehydrogenase (E3). The protein is Pyruvate dehydrogenase E1 component subunit beta-3, chloroplastic (E1-BETA-2) of Arabidopsis thaliana (Mouse-ear cress).